Consider the following 87-residue polypeptide: Glutaredoxin (87 aa).

The Glutaredoxin domain maps to 1–87 (MFKVYGYDSN…GFDQLREYFK (87 aa)). The cysteines at positions 14 and 17 are disulfide-linked.

The protein belongs to the glutaredoxin family.

Functionally, serves as a reducing agent for the phage-induced ribonucleotide reductase, but not for the bacterial ones. This specificity may be the result of sequence differences around the redox-active disulfide bond. The oxidized form accepts electrons from bacterial glutathione and will, in turn, reduce other small disulfides. Can also be reduced by NADPH and by bacterial thioredoxin reductase. This Enterobacteria phage T4 (Bacteriophage T4) protein is Glutaredoxin (NRDC).